Here is a 428-residue protein sequence, read N- to C-terminus: Cholecystokinin receptor type A (428 aa).

At 1–41 (MDVVDSLLVNGSNITPPCELGLENETLFCLDQPRPSKEWQP) the chain is on the extracellular side. N-linked (GlcNAc...) asparagine glycosylation is found at Asn-10 and Asn-24. A disulfide bond links Cys-18 and Cys-29. The helical transmembrane segment at 42-67 (AVQILLYSLIFLLSVLGNTLVITVLI) threads the bilayer. Residues 68–77 (RNKRMRTVTN) lie on the Cytoplasmic side of the membrane. The helical transmembrane segment at 78-104 (IFLLSLAVSDLMLCLFCMPFNLIPNLL) threads the bilayer. Topologically, residues 105–115 (KDFIFGSAVCK) are extracellular. A disulfide bridge connects residues Cys-114 and Cys-196. The chain crosses the membrane as a helical span at residues 116-137 (TTTYFMGTSVSVSTFNLVAISL). Residues 138 to 157 (ERYGAICKPLQSRVWQTKSH) are Cytoplasmic-facing. Residues 158 to 178 (ALKVIAATWCLSFTIMTPYPI) form a helical membrane-spanning segment. The Extracellular portion of the chain corresponds to 179 to 210 (YSNLVPFTKNNNQTANMCRFLLPNDVMQQSWH). Asn-190 is a glycosylation site (N-linked (GlcNAc...) asparagine). Residues 211–234 (TFLLLILFLIPGIVMMVAYGLISL) form a helical membrane-spanning segment. Residues 235–313 (ELYQGIKFEA…NLMAKKRVIR (79 aa)) lie on the Cytoplasmic side of the membrane. The interval 248–272 (KSAKERKPSTTSSGKYEDSDGCYLQ) is disordered. Residues 314–334 (MLIVIVVLFFLCWMPIFSANA) form a helical membrane-spanning segment. Residues 335-349 (WRAYDTASAERRLSG) lie on the Extracellular side of the membrane. Residues 350–373 (TPISFILLLSYTSSCVNPIIYCFM) traverse the membrane as a helical segment. Residues 374–428 (NKRFRLGFMATFPCCPNPGPPGARGEVGEEEEGGTTGASLSRFSYSHMSASVPPQ) are Cytoplasmic-facing. Cys-387 is lipidated: S-palmitoyl cysteine. Positions 394–428 (PGARGEVGEEEEGGTTGASLSRFSYSHMSASVPPQ) are disordered. Residues 411 to 422 (ASLSRFSYSHMS) show a composition bias toward polar residues.

This sequence belongs to the G-protein coupled receptor 1 family.

It localises to the cell membrane. Receptor for cholecystokinin. Mediates pancreatic growth and enzyme secretion, smooth muscle contraction of the gall bladder and stomach. Has a 1000-fold higher affinity for CCK rather than for gastrin. It modulates feeding and dopamine-induced behavior in the central and peripheral nervous system. This receptor mediates its action by association with G proteins that activate a phosphatidylinositol-calcium second messenger system. The sequence is that of Cholecystokinin receptor type A (CCKAR) from Homo sapiens (Human).